Reading from the N-terminus, the 526-residue chain is Trigger factor (526 aa).

The PPIase FKBP-type domain occupies Gly162 to Pro243. The segment covering Asp425–Lys460 has biased composition (basic and acidic residues). The segment at Asp425–Asp526 is disordered. Positions Lys461–Ala517 are enriched in basic residues.

The protein belongs to the FKBP-type PPIase family. Tig subfamily.

The protein localises to the cytoplasm. It catalyses the reaction [protein]-peptidylproline (omega=180) = [protein]-peptidylproline (omega=0). Involved in protein export. Acts as a chaperone by maintaining the newly synthesized protein in an open conformation. Functions as a peptidyl-prolyl cis-trans isomerase. This is Trigger factor from Corynebacterium jeikeium (strain K411).